Reading from the N-terminus, the 309-residue chain is Serine/threonine-protein phosphatase 2A catalytic subunit beta isoform (309 aa).

Mn(2+)-binding residues include Asp-57, His-59, Asp-85, and Asn-117. The Proton donor role is filled by His-118. Positions 167 and 241 each coordinate Mn(2+). Tyr-307 is subject to Phosphotyrosine. The residue at position 309 (Leu-309) is a Leucine methyl ester.

This sequence belongs to the PPP phosphatase family. PP-1 subfamily. PP2A consists of a common heterodimeric core enzyme (composed of a 36 kDa catalytic subunit (subunit C) and a 65 kDa constant regulatory subunit (PR65) (subunit A)) that associates with a variety of regulatory subunits. Proteins that associate with the core dimer include three families of regulatory subunits B (the R2/B/PR55/B55, R3/B''/PR72/PR130/PR59 and R5/B'/B56 families), the 48 kDa variable regulatory subunit, viral proteins, and cell signaling molecules. Binds PPME1. May indirectly interact with SGO1, most probably through regulatory B56 subunits. Interacts with CTTNBP2NL. Interacts with PTPA. Found in a complex with at least ARL2, PPP2CB, PPP2R1A, PPP2R2A, PPP2R5E and TBCD. Interacts with TBCD. Part of the core of STRIPAK complexes composed of PP2A catalytic and scaffolding subunits, the striatins (PP2A regulatory subunits), the striatin-associated proteins MOB4, STRIP1 and STRIP2, PDCD10 and members of the STE20 kinases, such as STK24 and STK26. It depends on Mn(2+) as a cofactor. In terms of processing, reversibly methyl esterified on Leu-309 by leucine carboxyl methyltransferase 1 (Lcmt1) and protein phosphatase methylesterase 1 (Ppme1). Carboxyl methylation influences the affinity of the catalytic subunit for the different regulatory subunits, thereby modulating the PP2A holoenzyme's substrate specificity, enzyme activity and cellular localization. Post-translationally, phosphorylation of either threonine (by autophosphorylation-activated protein kinase) or tyrosine results in inactivation of the phosphatase. Auto-dephosphorylation has been suggested as a mechanism for reactivation. May be monoubiquitinated by NOSIP.

It localises to the cytoplasm. The protein localises to the nucleus. Its subcellular location is the chromosome. It is found in the centromere. The protein resides in the cytoskeleton. It localises to the spindle pole. The catalysed reaction is O-phospho-L-seryl-[protein] + H2O = L-seryl-[protein] + phosphate. It catalyses the reaction O-phospho-L-threonyl-[protein] + H2O = L-threonyl-[protein] + phosphate. Its function is as follows. Catalytic subunit of protein phosphatase 2A (PP2A), a serine/threonine phosphatase involved in the regulation of a wide variety of enzymes, signal transduction pathways, and cellular events. PP2A can modulate the activity of phosphorylase B kinase, casein kinase 2, mitogen-stimulated S6 kinase, and MAP-2 kinase. Part of the striatin-interacting phosphatase and kinase (STRIPAK) complexes. STRIPAK complexes have critical roles in protein (de)phosphorylation and are regulators of multiple signaling pathways including Hippo, MAPK, nuclear receptor and cytoskeleton remodeling. Different types of STRIPAK complexes are involved in a variety of biological processes such as cell growth, differentiation, apoptosis, metabolism and immune regulation. The sequence is that of Serine/threonine-protein phosphatase 2A catalytic subunit beta isoform (Ppp2cb) from Mus musculus (Mouse).